Reading from the N-terminus, the 393-residue chain is Chorismate synthase (393 aa).

Positions 40 and 46 each coordinate NADP(+). Residues 129–131, 249–250, Gly-301, 316–320, and Arg-342 each bind FMN; these read RSS, QA, and KPIPT.

It belongs to the chorismate synthase family. Homotetramer. Requires FMNH2 as cofactor.

The enzyme catalyses 5-O-(1-carboxyvinyl)-3-phosphoshikimate = chorismate + phosphate. Its pathway is metabolic intermediate biosynthesis; chorismate biosynthesis; chorismate from D-erythrose 4-phosphate and phosphoenolpyruvate: step 7/7. Its function is as follows. Catalyzes the anti-1,4-elimination of the C-3 phosphate and the C-6 proR hydrogen from 5-enolpyruvylshikimate-3-phosphate (EPSP) to yield chorismate, which is the branch point compound that serves as the starting substrate for the three terminal pathways of aromatic amino acid biosynthesis. This reaction introduces a second double bond into the aromatic ring system. In Geotalea daltonii (strain DSM 22248 / JCM 15807 / FRC-32) (Geobacter daltonii), this protein is Chorismate synthase.